We begin with the raw amino-acid sequence, 324 residues long: Glyoxylate/hydroxypyruvate reductase B (324 aa).

Residues Arg237 and Glu266 contribute to the active site. The active-site Proton donor is His285.

Belongs to the D-isomer specific 2-hydroxyacid dehydrogenase family. GhrB subfamily. In terms of assembly, homodimer.

It localises to the cytoplasm. The catalysed reaction is glycolate + NADP(+) = glyoxylate + NADPH + H(+). It carries out the reaction (R)-glycerate + NAD(+) = 3-hydroxypyruvate + NADH + H(+). The enzyme catalyses (R)-glycerate + NADP(+) = 3-hydroxypyruvate + NADPH + H(+). Catalyzes the NADPH-dependent reduction of glyoxylate and hydroxypyruvate into glycolate and glycerate, respectively. In Salmonella schwarzengrund (strain CVM19633), this protein is Glyoxylate/hydroxypyruvate reductase B.